Here is a 34-residue protein sequence, read N- to C-terminus: Dermaseptin-H5 (34 aa).

Expressed by the skin glands.

The protein resides in the secreted. Its function is as follows. Has antimicrobial activity. This chain is Dermaseptin-H5, found in Pithecopus hypochondrialis (Orange-legged leaf frog).